A 1115-amino-acid chain; its full sequence is G-protein coupled receptor GRL101 (1115 aa).

The first 24 residues, 1-24 (MATMSGTTIVCLIYLTTMLGNSQG), serve as a signal peptide directing secretion. The Extracellular portion of the chain corresponds to 25–767 (VNLKIESPSP…SCEDLMSNHV (743 aa)). 12 consecutive LDL-receptor class A domains span residues 36–79 (TLCS…TCGC), 77–115 (CGCLQSEFQCNHTTCIDKILRCDRNDDCSNGLDERECDI), 116–155 (YICPLGTHVKWHNHFCVPRDKQCDFLDDCGDNSDEKICER), 156–196 (RECV…ACDS), 195–232 (DSDKYFQCAEGSLIKKEFVCDGWVDCKLTFADELNCKL), 231–269 (KLCDEDDFRCSDTRCIQKSNVCDGYCDCKTCDDEEVCAN), 272–318 (YGCP…YCSN), 320–363 (SECK…SCLA), 365–403 (PKCSQDEFQCHHGKCIPISKRCDSVHDCVDWSDEMNCEN), 404–442 (HQCAANMKSCLSGHCIEEHKWCNFHRECPDGSDEKDCDP), 444–485 (PVCE…NCSQ), and 486–525 (HICLEGQFRCRKSFCINQTKVCDGTVDCLQGMWDENNCRY). 16 disulfide bridges follow: Cys-38–Cys-53, Cys-46–Cys-66, Cys-60–Cys-77, Cys-79–Cys-91, Cys-86–Cys-104, Cys-98–Cys-113, Cys-118–Cys-131, Cys-138–Cys-153, Cys-158–Cys-170, Cys-165–Cys-183, Cys-177–Cys-194, Cys-202–Cys-220, Cys-214–Cys-230, Cys-233–Cys-245, Cys-240–Cys-258, and Cys-252–Cys-267. Asn-87 carries an N-linked (GlcNAc...) asparagine glycan. Residue Asn-166 is glycosylated (N-linked (GlcNAc...) asparagine). N-linked (GlcNAc...) asparagine glycosylation is present at Asn-269. Cystine bridges form between Cys-274–Cys-291, Cys-282–Cys-304, and Cys-298–Cys-316. Asn-318 is a glycosylation site (N-linked (GlcNAc...) asparagine). Intrachain disulfides connect Cys-322–Cys-339, Cys-334–Cys-352, Cys-346–Cys-361, Cys-367–Cys-379, Cys-374–Cys-392, Cys-386–Cys-401, Cys-406–Cys-418, Cys-413–Cys-431, Cys-425–Cys-440, Cys-446–Cys-458, Cys-453–Cys-474, Cys-465–Cys-483, Cys-488–Cys-500, Cys-495–Cys-513, and Cys-507–Cys-523. N-linked (GlcNAc...) asparagine glycosylation occurs at Asn-482. An N-linked (GlcNAc...) asparagine glycan is attached at Asn-502. An LRRNT domain is found at 518-562 (WDENNCRYWCPHGQAICQCEGVTMDCTGQKLKEMPVQQMEEDLSK). An N-linked (GlcNAc...) asparagine glycan is attached at Asn-571. LRR repeat units follow at residues 584–605 (KVTYLDLSRNHLTEIPIYSFQN), 608–629 (KLTHLNLADNNITSLKNGSLLG), 632–653 (NLKQLHINGNKIETIEEDTFSS), 656–677 (HLTVLDLSNQRLTHVYKNMFKG), 680–701 (QITVLNISRNQINSIDNGAFNN), and 704–725 (NVRLIDLSGNVIKDIGQKVFMG). Asn-618 and Asn-624 each carry an N-linked (GlcNAc...) asparagine glycan. Asn-685 carries N-linked (GlcNAc...) asparagine glycosylation. Residues 768-788 (LRVSIWVLGVIALVGNFVVIF) traverse the membrane as a helical segment. The Cytoplasmic segment spans residues 789 to 801 (WRVRDFRGGKVHS). A helical transmembrane segment spans residues 802 to 822 (FLITNLAIGDFLMGVYLLIIA). Topologically, residues 823 to 857 (TADTYYRGVYISHDENWKQSGLCQFAGFVSTFSSE) are extracellular. A helical membrane pass occupies residues 858–878 (LSVLTLSTITLDRLICILFPL). Topologically, residues 879 to 887 (RRTRLGLRQ) are cytoplasmic. The helical transmembrane segment at 888-908 (AIIVMSCIWVLVFLLAVLPLL) threads the bilayer. The Extracellular segment spans residues 909–941 (GFSYFENFYGRSGVCLALHVTPDRRPGWEYSVG). The helical transmembrane segment at 942–962 (VFILLNLLSFVLIASSYLWMF) threads the bilayer. Over 963-988 (SVAKKTRSAVRTAESKNDNAMARRMT) the chain is Cytoplasmic. The chain crosses the membrane as a helical span at residues 989–1009 (LIVMTDFCCWVPIIVLGFVSL). The Extracellular segment spans residues 1010–1017 (AGARADDQ). Residues 1018–1038 (VYAWIAVFVLPLNSATNPVIY) form a helical membrane-spanning segment. Topologically, residues 1039–1115 (TLSTAPFLGN…YYNTELHSDS (77 aa)) are cytoplasmic.

This sequence belongs to the G-protein coupled receptor 1 family. In terms of tissue distribution, predominantly expressed in a small number of neurons within the central nervous system and to a lesser extent in the heart.

Its subcellular location is the cell membrane. Its function is as follows. Might directly transduce signals carried by large extracellular lipoprotein complexes into neuronal events. This Lymnaea stagnalis (Great pond snail) protein is G-protein coupled receptor GRL101.